The following is a 340-amino-acid chain: MARDEVRRILPADIKREVLIKDENAETNPDWGFPPEKRPIEMHIQFGVINLDKPPGPTSHEVVAWIKKILNLEKAGHGGTLDPKVSGVLPVALEKATRVVQALLPAGKEYVALMHLHGDVPEDKIIQVMKEFEGEIIQRPPLRSAVKRRLRTRKVYYIEVLEIEGRDVLFRVGVEAGTYIRSLIHHIGLALGVGAHMSELRRTRSGPFKEDETLITLHDLVDYYYFWKEDGIEEYFRKAIQPMEKAVEHLPKVWIKDSAVAAVTHGADLAVPGIAKLHAGIKRGDLVAIMTLKDELVALGKAMMTSQEMLEKTKGIAVDVEKVFMPRDWYPKLWEKRDRS.

The active-site Nucleophile is the D82. Positions 250–325 (LPKVWIKDSA…IAVDVEKVFM (76 aa)) constitute a PUA domain.

This sequence belongs to the pseudouridine synthase TruB family. Type 2 subfamily.

It carries out the reaction uridine(55) in tRNA = pseudouridine(55) in tRNA. In terms of biological role, could be responsible for synthesis of pseudouridine from uracil-55 in the psi GC loop of transfer RNAs. This Pyrococcus furiosus (strain ATCC 43587 / DSM 3638 / JCM 8422 / Vc1) protein is Probable tRNA pseudouridine synthase B.